Here is a 316-residue protein sequence, read N- to C-terminus: Olfactory receptor 10H4 (316 aa).

The Extracellular segment spans residues Met1–Pro26. Asn5 carries an N-linked (GlcNAc...) asparagine glycan. The chain crosses the membrane as a helical span at residues Ile27–Met47. Residues Ala48 to Arg55 are Cytoplasmic-facing. A helical membrane pass occupies residues Leu56–Val76. The Extracellular segment spans residues Ala77–Asn100. Cys98 and Cys190 form a disulfide bridge. A helical transmembrane segment spans residues Gln101–Tyr121. The Cytoplasmic segment spans residues Asp122–Arg140. Residues Asp141–Thr161 form a helical membrane-spanning segment. Topologically, residues Thr162–Ile198 are extracellular. Residues Met199–Ser219 traverse the membrane as a helical segment. The Cytoplasmic portion of the chain corresponds to Tyr220–Thr239. The helical transmembrane segment at Phe240–Ile260 threads the bilayer. The Extracellular segment spans residues Tyr261–Asp273. The chain crosses the membrane as a helical span at residues Ala274–Leu294. Residues Arg295–Ser316 lie on the Cytoplasmic side of the membrane.

This sequence belongs to the G-protein coupled receptor 1 family.

It is found in the cell membrane. In terms of biological role, odorant receptor. In Homo sapiens (Human), this protein is Olfactory receptor 10H4 (OR10H4).